We begin with the raw amino-acid sequence, 401 residues long: S-adenosylmethionine synthase (401 aa).

Histidine 16 serves as a coordination point for ATP. Mg(2+) is bound at residue aspartate 18. Glutamate 44 contacts K(+). L-methionine is bound by residues glutamate 57 and glutamine 100. The segment at 100–110 (QSPDIAQGVNE) is flexible loop. ATP-binding positions include 174 to 176 (DAK), 241 to 242 (RF), aspartate 250, 256 to 257 (RK), alanine 273, and lysine 277. Aspartate 250 serves as a coordination point for L-methionine. Lysine 281 is a binding site for L-methionine.

Belongs to the AdoMet synthase family. Homotetramer; dimer of dimers. Requires Mg(2+) as cofactor. The cofactor is K(+).

It localises to the cytoplasm. It catalyses the reaction L-methionine + ATP + H2O = S-adenosyl-L-methionine + phosphate + diphosphate. The protein operates within amino-acid biosynthesis; S-adenosyl-L-methionine biosynthesis; S-adenosyl-L-methionine from L-methionine: step 1/1. In terms of biological role, catalyzes the formation of S-adenosylmethionine (AdoMet) from methionine and ATP. The overall synthetic reaction is composed of two sequential steps, AdoMet formation and the subsequent tripolyphosphate hydrolysis which occurs prior to release of AdoMet from the enzyme. This is S-adenosylmethionine synthase from Streptococcus equi subsp. zooepidemicus (strain MGCS10565).